The chain runs to 283 residues: (+)-borneol dehydrogenase 2 (283 aa).

Residues 27–33 (GGSSGIG), D51, 76–77 (DV), and 103–105 (NAG) each bind NAD(+). Residue S157 is the Proton donor of the active site. Y170, K174, and T205 together coordinate NAD(+). Catalysis depends on Y170, which acts as the Proton acceptor. Residue K174 is the Proton donor/acceptor of the active site.

Belongs to the short-chain dehydrogenases/reductases (SDR) family.

It catalyses the reaction (1R,2S,4R)-borneol + NAD(+) = (1R,4R)-camphor + NADH + H(+). In terms of biological role, involved in the biosynthesis of monoterpene natural products related to camphor. Catalayzes the oxidation of (+)-borneol to (+)-camphor. Shows absolute selectivity towards (+)-borneol. Catalyzes the oxidation of (+)-isoborneol to (-)-camphor. Shows absolute selectivity towards (+)-isoborneol. The chain is (+)-borneol dehydrogenase 2 from Salvia officinalis (Sage).